A 248-amino-acid polypeptide reads, in one-letter code: 23S rRNA (guanosine-2'-O-)-methyltransferase RlmB (248 aa).

Positions 198, 218, and 227 each coordinate S-adenosyl-L-methionine.

The protein belongs to the class IV-like SAM-binding methyltransferase superfamily. RNA methyltransferase TrmH family. RlmB subfamily.

It is found in the cytoplasm. It carries out the reaction guanosine(2251) in 23S rRNA + S-adenosyl-L-methionine = 2'-O-methylguanosine(2251) in 23S rRNA + S-adenosyl-L-homocysteine + H(+). Specifically methylates the ribose of guanosine 2251 in 23S rRNA. The sequence is that of 23S rRNA (guanosine-2'-O-)-methyltransferase RlmB from Pseudomonas putida (strain ATCC 47054 / DSM 6125 / CFBP 8728 / NCIMB 11950 / KT2440).